The sequence spans 286 residues: ATP synthase gamma chain (286 aa).

The protein belongs to the ATPase gamma chain family. In terms of assembly, F-type ATPases have 2 components, CF(1) - the catalytic core - and CF(0) - the membrane proton channel. CF(1) has five subunits: alpha(3), beta(3), gamma(1), delta(1), epsilon(1). CF(0) has three main subunits: a, b and c.

It is found in the cell inner membrane. In terms of biological role, produces ATP from ADP in the presence of a proton gradient across the membrane. The gamma chain is believed to be important in regulating ATPase activity and the flow of protons through the CF(0) complex. This Shewanella sp. (strain ANA-3) protein is ATP synthase gamma chain.